The primary structure comprises 536 residues: Fanconi anemia group E protein (536 aa).

The interval 150 to 371 (MEGASPLSER…VLTRSLFLGR (222 aa)) is interaction with FANCC. The disordered stretch occupies residues 171 to 252 (LGLGGRRLKS…ADGGSASPIK (82 aa)). Residues 230-239 (EKERPEHKSL) are compositionally biased toward basic and acidic residues. A Phosphoserine modification is found at Ser-249. Thr-346 bears the Phosphothreonine; by CHEK1 mark. Position 374 is a phosphoserine; by CHEK1 (Ser-374).

In terms of assembly, belongs to the multisubunit FA complex composed of FANCA, FANCB, FANCC, FANCE, FANCF, FANCG, FANCL/PHF9 and FANCM. The complex is not found in FA patients. Interacts with FANCC and FANCD2. In terms of processing, phosphorylated. Phosphorylation by CHEK1 at Thr-346 and Ser-374 regulates its function in DNA cross-links repair. Ubiquitinated. Phosphorylation by CHEK1 induces polyubiquitination and degradation.

It is found in the nucleus. In terms of biological role, as part of the Fanconi anemia (FA) complex functions in DNA cross-links repair. Required for the nuclear accumulation of FANCC and provides a critical bridge between the FA complex and FANCD2. This is Fanconi anemia group E protein (FANCE) from Homo sapiens (Human).